The primary structure comprises 233 residues: Ribonuclease 3 (233 aa).

In terms of domain architecture, RNase III spans 4–126; that stretch reads LNKLMERLGH…IVGAIYIDAG (123 aa). E39 serves as a coordination point for Mg(2+). Residue D43 is part of the active site. Mg(2+) is bound by residues D112 and E115. Residue E115 is part of the active site. The DRBM domain maps to 153–222; the sequence is DAKSLLQEWL…AKRFLELLDD (70 aa).

Belongs to the ribonuclease III family. As to quaternary structure, homodimer. Mg(2+) is required as a cofactor.

The protein resides in the cytoplasm. It carries out the reaction Endonucleolytic cleavage to 5'-phosphomonoester.. In terms of biological role, digests double-stranded RNA. Involved in the processing of primary rRNA transcript to yield the immediate precursors to the large and small rRNAs (23S and 16S). Processes some mRNAs, and tRNAs when they are encoded in the rRNA operon. Processes pre-crRNA and tracrRNA of type II CRISPR loci if present in the organism. The protein is Ribonuclease 3 of Coxiella burnetii (strain RSA 331 / Henzerling II).